Reading from the N-terminus, the 147-residue chain is Truncated RecQ DNA helicase-like protein C212.06c (147 aa).

Positions 1 to 72 (MGVRLVVHYR…CVRSFLASEM (72 aa)) constitute a Helicase C-terminal domain. Residues 100–147 (ETPKPAIATHSRYNASFSSSPPPQPGSSSGMSAMNTNTTSTTPVSGKT) are disordered. Low complexity predominate over residues 125–141 (GSSSGMSAMNTNTTSTT).

It belongs to the helicase family. RecQ subfamily.

Functionally, truncated ATP-dependent 3'-5' DNA helicase. This Schizosaccharomyces pombe (strain 972 / ATCC 24843) (Fission yeast) protein is Truncated RecQ DNA helicase-like protein C212.06c.